The following is a 392-amino-acid chain: ATP phosphoribosyltransferase regulatory subunit (392 aa).

Belongs to the class-II aminoacyl-tRNA synthetase family. HisZ subfamily. As to quaternary structure, heteromultimer composed of HisG and HisZ subunits.

The protein localises to the cytoplasm. It functions in the pathway amino-acid biosynthesis; L-histidine biosynthesis; L-histidine from 5-phospho-alpha-D-ribose 1-diphosphate: step 1/9. Its function is as follows. Required for the first step of histidine biosynthesis. May allow the feedback regulation of ATP phosphoribosyltransferase activity by histidine. In Prochlorococcus marinus (strain MIT 9211), this protein is ATP phosphoribosyltransferase regulatory subunit.